An 870-amino-acid chain; its full sequence is Lysosomal cholesterol signaling protein (870 aa).

The Lumenal portion of the chain corresponds to 1–38; sequence MNSNLPAENLTIAVNMTKTLPTAVTHGFNSTNDPPSMS. A PIN-like transporter region spans residues 1–370; that stretch reads MNSNLPAENL…SAWLLTFPTM (370 aa). N-linked (GlcNAc...) asparagine glycosylation is found at N9, N15, and N29. Residues 39–59 traverse the membrane as a helical segment; the sequence is ITRLFPALLECFGIVLCGYIA. Residues F43 and Y57 each coordinate cholesterol. Residues 60–79 are Cytoplasmic-facing; it reads GRANVITSTQAKGLGNFVSR. The chain crosses the membrane as a helical span at residues 80–100; that stretch reads FALPALLFKNMVVLNFSNVDW. Topologically, residues 101 to 104 are lumenal; it reads SFLY. Residues 105–125 form a helical membrane-spanning segment; that stretch reads SILIAKASVFFIVCVLTLLVA. The Cytoplasmic segment spans residues 126–133; that stretch reads SPDSRFSK. The discontinuously helical transmembrane segment at 134–154 threads the bilayer; sequence AGLFPIFATQSNDFALGYPIV. Over 155 to 167 the chain is Lumenal; it reads EALYQTTYPEYLQ. Residues 168-188 traverse the membrane as a helical segment; it reads YIYLVAPISLMMLNPIGFIFC. Over 189–213 the chain is Cytoplasmic; sequence EIQKWKDTQNASQNKIKIVGLGLLR. The chain crosses the membrane as a discontinuously helical span at residues 214 to 234; the sequence is VLQNPIVFMVFIGIAFNFILD. Residues 235-243 are Lumenal-facing; sequence RKVPVYVEN. The chain crosses the membrane as a discontinuously helical span at residues 244 to 264; the sequence is FLDGLGNSFSGSALFYLGLTM. Over 265–273 the chain is Cytoplasmic; it reads VGKIKRLKK. 3 residues coordinate cholesterol: G266, K267, and I268. The helical transmembrane segment at 274–294 threads the bilayer; the sequence is SAFVVLILLITAKLLVLPLLC. Residues 295–315 are Lumenal-facing; that stretch reads REMVELLDKGDSVVNHTSLSN. N-linked (GlcNAc...) asparagine glycosylation occurs at N309. A discontinuously helical transmembrane segment spans residues 316 to 336; that stretch reads YAFLYGVFPVAPGVAIFATQF. Residues 337 to 346 lie on the Cytoplasmic side of the membrane; the sequence is NMEVEIITSG. Residues 347 to 367 form a helical membrane-spanning segment; it reads MVISTFVSAPIMYVSAWLLTF. The Lumenal portion of the chain corresponds to 368 to 381; the sequence is PTMDPKPLAYAIQN. The GPCR stretch occupies residues 380-717; it reads QNVSFDISIV…FGIFGLDKHL (338 aa). Residue N381 is glycosylated (N-linked (GlcNAc...) asparagine). A helical transmembrane segment spans residues 382–402; it reads VSFDISIVSLISLIWSLAILL. Over 403-414 the chain is Cytoplasmic; that stretch reads LSKKYKQLPHML. A helical membrane pass occupies residues 415 to 435; it reads TTNLLIAQSIVCAGMMIWNFV. At 436 to 438 the chain is on the lumenal side; the sequence is KEK. Residues 439-459 traverse the membrane as a helical segment; that stretch reads NFVGQILVFVLLYSSLYSTYL. Topologically, residues 460 to 480 are cytoplasmic; sequence WTGLLAISLFLLKKRERVQIP. The chain crosses the membrane as a helical span at residues 481-501; that stretch reads VGIIIISGWGIPALLVGVLLI. The Lumenal segment spans residues 502-520; sequence TGKHNGDSIDSAFFYGKEQ. Residues 521–541 form a helical membrane-spanning segment; it reads MITTAVTLFCSILIAGISLMC. Over 542–660 the chain is Cytoplasmic; the sequence is MNQTAQAGSY…GDQQLTRHVL (119 aa). R657 serves as a coordination point for cholesterol. The chain crosses the membrane as a helical span at residues 661–681; sequence LCLLLIIGLFANLSSCLWWLF. The Lumenal segment spans residues 682 to 691; the sequence is NQEPGRLYVE. A helical transmembrane segment spans residues 692–712; it reads LQFFCAVFNFGQGFISFGIFG. The Cytoplasmic portion of the chain corresponds to 713–870; sequence LDKHLIILPF…SSPPSHSPKT (158 aa). Residues 757–835 form the DEP domain; it reads YHRDLCIRNI…DEYLFYRFLQ (79 aa).

Homodimer; via the transporter region and DEP domain. Interacts with the GATOR1 complex and prevents interaction between GATOR1 and KICSTOR; this interaction is disrupted upon cholesterol starvation.

It is found in the lysosome membrane. Its function is as follows. Cholesterol-binding protein that acts as a regulator of mTORC1 signaling pathway. Acts as a sensor of cholesterol to signal cholesterol sufficiency to mTORC1: in presence of cholesterol, binds cholesterol, leading to disruption of the interaction between the GATOR1 and KICSTOR complexes and promotion of mTORC1 signaling. Upon cholesterol starvation, GPR155/LYCHOS is unable to perturb the association between GATOR1 and KICSTOR, leading to mTORC1 signaling inhibition. Binds indole-3-acetic acid and may play a role in tryptophan metabolism. The sequence is that of Lysosomal cholesterol signaling protein from Homo sapiens (Human).